Consider the following 852-residue polypeptide: Replication factor C small subunit (852 aa).

A DOD-type homing endonuclease domain is found at 183–306 (WLGYFMGSGY…IAYALASFGI (124 aa)).

The protein belongs to the activator 1 small subunits family. RfcS subfamily. As to quaternary structure, heteromultimer composed of three to four small subunits (RfcS) and one to two large subunits (RfcL). In terms of processing, this protein undergoes a protein self splicing that involves a post-translational excision of the intervening region (intein) followed by peptide ligation.

In terms of biological role, part of the RFC clamp loader complex which loads the PCNA sliding clamp onto DNA. The complex possesses DNA-dependent ATPase activity which is further stimulated by PCNA. The sequence is that of Replication factor C small subunit (rfcS) from Pyrococcus furiosus (strain ATCC 43587 / DSM 3638 / JCM 8422 / Vc1).